Here is a 278-residue protein sequence, read N- to C-terminus: Ras-related protein Rab-40A-like (278 aa).

Residues G26, K27, and S28 each coordinate GTP. Residue S28 coordinates Mg(2+). Residues 41 to 49 (SPYSHLGGI) form a switch-I region. D69 provides a ligand contact to Mg(2+). Positions 72, 126, and 127 each coordinate GTP. The switch-II stretch occupies residues 72 to 88 (GQGRFCTIFRSYSRGAQ). Residues 175–228 (LLRHRLNWLGRPSKVLSLQDLCCRTIVSCTPVHLVDKLPLPIALRSHLKSFSMA) form the SOCS box domain. C270 carries the S-palmitoyl cysteine lipid modification. C275 carries the S-geranylgeranyl cysteine lipid modification.

The protein belongs to the small GTPase superfamily. Rab family. Requires Mg(2+) as cofactor. Expressed in brain, lung, heart, skeletal muscle, kidney and liver. Highest expression in brain. Expressed in fetal brain and kidney.

It is found in the membrane. The protein localises to the cytoplasm. It localises to the mitochondrion. It carries out the reaction GTP + H2O = GDP + phosphate + H(+). It participates in protein modification; protein ubiquitination. Its activity is regulated as follows. Regulated by guanine nucleotide exchange factors (GEFs) which promote the exchange of bound GDP for free GTP. Regulated by GTPase activating proteins (GAPs) which increase the GTP hydrolysis activity. Inhibited by GDP dissociation inhibitors (GDIs). In terms of biological role, may act as substrate-recognition component of the ECS(RAB40) E3 ubiquitin ligase complex which mediates the ubiquitination and subsequent proteasomal degradation of target proteins. The Rab40 subfamily belongs to the Rab family that are key regulators of intracellular membrane trafficking, from the formation of transport vesicles to their fusion with membranes. Rabs cycle between an inactive GDP-bound form and an active GTP-bound form that is able to recruit to membranes different sets of downstream effectors directly responsible for vesicle formation, movement, tethering and fusion. In Homo sapiens (Human), this protein is Ras-related protein Rab-40A-like.